We begin with the raw amino-acid sequence, 279 residues long: Lectin 9 (279 aa).

The signal sequence occupies residues 1-23; that stretch reads MALSSALIKIFITFLFLQNHVNS. 4 N-linked (GlcNAc...) asparagine glycosylation sites follow: Asn116, Asn139, Asn235, and Asn272.

This sequence belongs to the leguminous lectin family.

Its function is as follows. May be involved in arbuscular mycorrhizal (AM) symbiosis with AM fungi. The sequence is that of Lectin 9 from Medicago truncatula (Barrel medic).